The sequence spans 191 residues: MKTLFDTKELLNEFDINLIGIDEAGRGALAGPMMMAACKLNKKLDGLCDSKKLSEKKREELYEIIIKNSNYLILAFSSEQIDALGLSTCLKTGLKLIKKHFKTENNFLYDGNTNLGINGIKTQIKADASILQVSAASILAKVSKDRVMNFLAKDFPCYEFEKNKAYGTKAHKELIAKFGICKLHRKSFKLL.

The RNase H type-2 domain occupies 16–191 (INLIGIDEAG…KLHRKSFKLL (176 aa)). 3 residues coordinate a divalent metal cation: Asp22, Glu23, and Asp110.

This sequence belongs to the RNase HII family. It depends on Mn(2+) as a cofactor. Requires Mg(2+) as cofactor.

The protein resides in the cytoplasm. It carries out the reaction Endonucleolytic cleavage to 5'-phosphomonoester.. Functionally, endonuclease that specifically degrades the RNA of RNA-DNA hybrids. In Campylobacter jejuni subsp. jejuni serotype O:6 (strain 81116 / NCTC 11828), this protein is Ribonuclease HII.